The chain runs to 286 residues: NFU1 iron-sulfur cluster scaffold homolog, mitochondrial (286 aa).

A mitochondrion-targeting transit peptide spans 1 to 66 (MSKLLTNTAL…RQIQLSGARN (66 aa)). The interval 182-250 (IKELLDTRIR…IPEVESVEQV (69 aa)) is nifU. [4Fe-4S] cluster-binding residues include Cys219 and Cys222.

The protein belongs to the NifU family.

It is found in the mitochondrion. Functionally, molecular scaffold for [Fe-S] cluster assembly of mitochondrial iron-sulfur proteins. This chain is NFU1 iron-sulfur cluster scaffold homolog, mitochondrial, found in Drosophila ananassae (Fruit fly).